Reading from the N-terminus, the 532-residue chain is Protein DETOXIFICATION 48 (532 aa).

Helical transmembrane passes span 65 to 85 (ISGPTAMTGLLMYSRAMISML), 95 to 115 (LAGGSLSIGFANITGYSVISG), 136 to 156 (LGLTLQRTVLLLLSCSVPISF), 174 to 194 (ISSVAQQFLLFAIPDLFLLSL), 211 to 231 (VTYSTAVSVLLHVPLNYLLVV), 235 to 255 (MGVAGVAIAMVLTNLNLVVLL), 279 to 301 (GWSALLSLAIPTCVSVCLEWWWY), 322 to 342 (GILIQTTALVYVFPSSLSLGV), 363 to 383 (IISLFCAIALGLMAMVFAVLV), 397 to 417 (ILQLTSIALPIVGLCELGNCP), 437 to 457 (INLGSFYFVGMPVAILFGFVF), and 464 to 484 (LWFGLLAAQATCASLMLCALL). Positions 496 to 532 (EELTSQTPGKSPPLLPIASSKSRSTSGTEDMMRTMLV) are disordered. Residues 514–523 (SSKSRSTSGT) show a composition bias toward polar residues.

This sequence belongs to the multi antimicrobial extrusion (MATE) (TC 2.A.66.1) family. Highly expressed in shoot apices relative to leaves. At vegetative stages, highly expressed at the stipules. At reproductive stages, most highly expressed in the mature pollen. Also expressed in the tips of sepals.

Its subcellular location is the golgi apparatus membrane. The protein resides in the late endosome membrane. Functionally, functions as a multidrug and toxin extrusion transporter. Contributes to iron homeostasis during stress responses and senescence. Could be involved in specifying the lateral organ initiation rate. May act as a negative regulator of hypocotyl cell elongation in the light. The chain is Protein DETOXIFICATION 48 from Arabidopsis thaliana (Mouse-ear cress).